The sequence spans 99 residues: Cell division protein FtsB (99 aa).

Residues 1 to 3 (MKF) are Cytoplasmic-facing. Residues 4–21 (FVIALIVLLGLLQYRLWS) traverse the membrane as a helical segment. Over 22–99 (GDNSLPEYFV…GDRSVSSPSQ (78 aa)) the chain is Periplasmic. A coiled-coil region spans residues 31–73 (VLQKQIAAQQEGNAKLNERNQVLKEEIIDLKSGTEAIEERARN).

This sequence belongs to the FtsB family. Part of a complex composed of FtsB, FtsL and FtsQ.

It is found in the cell inner membrane. Functionally, essential cell division protein. May link together the upstream cell division proteins, which are predominantly cytoplasmic, with the downstream cell division proteins, which are predominantly periplasmic. This Shewanella sp. (strain ANA-3) protein is Cell division protein FtsB.